A 569-amino-acid chain; its full sequence is Urease subunit alpha (569 aa).

Residues 131–569 (GSIDTHIHFI…VPMAQRYFLL (439 aa)) form the Urease domain. 3 residues coordinate Ni(2+): histidine 136, histidine 138, and lysine 219. Lysine 219 is subject to N6-carboxylysine. Residue histidine 221 coordinates substrate. 2 residues coordinate Ni(2+): histidine 248 and histidine 274. The active-site Proton donor is histidine 322. Aspartate 362 is a binding site for Ni(2+).

This sequence belongs to the metallo-dependent hydrolases superfamily. Urease alpha subunit family. As to quaternary structure, heterotrimer of UreA (gamma), UreB (beta) and UreC (alpha) subunits. Three heterotrimers associate to form the active enzyme. Requires Ni cation as cofactor. Post-translationally, carboxylation allows a single lysine to coordinate two nickel ions.

It is found in the cytoplasm. The catalysed reaction is urea + 2 H2O + H(+) = hydrogencarbonate + 2 NH4(+). It participates in nitrogen metabolism; urea degradation; CO(2) and NH(3) from urea (urease route): step 1/1. The polypeptide is Urease subunit alpha (Prochlorococcus marinus (strain MIT 9215)).